We begin with the raw amino-acid sequence, 287 residues long: Oxaloacetate decarboxylase (287 aa).

Serine 50 is a binding site for substrate. Aspartate 88 lines the Mg(2+) pocket. Residues arginine 159 and histidine 235 each coordinate substrate.

The protein belongs to the isocitrate lyase/PEP mutase superfamily. Oxaloacetate decarboxylase family. In terms of assembly, homotetramer; dimer of dimers. Mg(2+) serves as cofactor.

The catalysed reaction is oxaloacetate + H(+) = pyruvate + CO2. Its function is as follows. Catalyzes the decarboxylation of oxaloacetate into pyruvate. Seems to play a role in maintaining cellular concentrations of bicarbonate and pyruvate. The sequence is that of Oxaloacetate decarboxylase from Chromohalobacter salexigens (strain ATCC BAA-138 / DSM 3043 / CIP 106854 / NCIMB 13768 / 1H11).